A 311-amino-acid polypeptide reads, in one-letter code: Probable hydrogen peroxide-inducible genes activator (311 aa).

The HTH lysR-type domain occupies 8–65 (PTIAGLRAFVAVAEKRQFSGAATALGVSQSTLSQVLAALEAGLGTQLVERSTRRVFLT). A DNA-binding region (H-T-H motif) is located at residues 25–44 (FSGAATALGVSQSTLSQVLA).

The protein belongs to the LysR transcriptional regulatory family.

Required for the induction the katG gene for catalase. Involved in the response to hydrogen peroxide. The chain is Probable hydrogen peroxide-inducible genes activator (oxyR) from Mycobacterium avium.